The sequence spans 30 residues: Hainantoxin F6-34.84 (30 aa).

2 disulfide bridges follow: Cys2-Cys15 and Cys9-Cys24.

This sequence belongs to the AVIT (prokineticin) family. Expressed by the venom gland.

Its subcellular location is the secreted. This chain is Hainantoxin F6-34.84, found in Cyriopagopus hainanus (Chinese bird spider).